Here is a 2045-residue protein sequence, read N- to C-terminus: Host cell factor 1 (2045 aa).

Ala-2 is modified (N-acetylalanine). Ser-6 bears the Phosphoserine mark. Kelch repeat units follow at residues 44-89, 93-140, 148-194, 217-265, and 266-313; these read LIVV…GFVC, RLLV…RLGH, KCYL…ITYG, KLVI…TIGN, and KMYV…LMDT. Residues Lys-105, Lys-163, and Lys-244 each participate in a glycyl lysine isopeptide (Lys-Gly) (interchain with G-Cter in ubiquitin) cross-link. A Glycyl lysine isopeptide (Lys-Gly) (interchain with G-Cter in SUMO2) cross-link involves residue Lys-282. At Lys-288 the chain carries N6-acetyllysine. A Glycyl lysine isopeptide (Lys-Gly) (interchain with G-Cter in ubiquitin) cross-link involves residue Lys-363. Residues 366–457 form the Fibronectin type-III 1 domain; that stretch reads PPARVQLVRA…VPQAATAPPS (92 aa). The disordered stretch occupies residues 407–434; it reads ATATSPTPNPVPSVPANPPKSPAPAAAA. Ser-411 bears the Phosphoserine mark. Pro residues predominate over residues 413 to 428; sequence TPNPVPSVPANPPKSP. Positions 500-550 are required for interaction with OGT; that stretch reads LVTMRPASQAGKAPVTVTSLPASVRMVVPTQSAQGTVIGSNPQMSGMAALA. 2 positions are modified to omega-N-methylarginine: Arg-504 and Arg-524. Phosphoserine is present on residues Ser-598, Ser-666, and Ser-669. An interaction with SIN3A region spans residues 610–722; sequence LKTAAAQVGT…KGPLPAGTIL (113 aa). Residues 750 to 902 are interaction with ZBTB17; the sequence is ILGISSVSPS…SLAGAGAHST (153 aa). Lys-813 carries the post-translational modification N6-acetyllysine. Positions 813–912 are interaction with GABP2; that stretch reads KIITAVPKIA…SASLATPITT (100 aa). HCF repeat repeat units lie at residues 1010–1035, 1072–1097, and 1101–1126; these read TLVCSNPPCETHETGTTNTATTTVVA, VRVCSNPPCETHETGTTNTATTATSN, and QHGCSNPPCETHETGTTSTATTAMSS. The HCF repeat 4; degenerate repeat unit spans residues 1157–1182; that stretch reads VQGTVKPQCQTQQTNMTTTTMTVQAT. Position 1204 is a phosphoserine (Ser-1204). Arg-1216 carries the asymmetric dimethylarginine modification. 4 disordered regions span residues 1219-1242, 1302-1375, 1444-1475, and 1494-1525; these read LSGPSSKDMPTGRQPETYHTYTTN, PCET…TSTG, TVTSNMSSNQDPPPAASDQGEVASTQGDSTNI, and TTVTQSTPVPGPSVPPPEELQVSPGPRQQLPP. The residue at position 1223 (Ser-1223) is a Phosphoserine. HCF repeat repeat units lie at residues 1295–1320 and 1323–1348; these read TQVCSNPPCETHETGTTNTATTSNAG and QRVCSNPPCETHETGTTHTATTATSN. Over residues 1308–1321 the composition is skewed to low complexity; sequence TGTTNTATTSNAGS. Residues 1358 to 1383 form an HCF repeat 7; degenerate repeat; the sequence is QQPASGHPCETHQTTSTGTTMSVSVG. One copy of the HCF repeat 8 repeat lies at 1423–1448; the sequence is QRVCSNPPCETHETGTTHTATTVTSN. Phosphothreonine is present on Thr-1500. Pro residues predominate over residues 1502–1511; sequence VPGPSVPPPE. 3 positions are modified to phosphoserine: Ser-1506, Ser-1516, and Ser-1781. 2 Fibronectin type-III domains span residues 1808–1898 and 1900–2016; these read PPPP…TCLP and FPGA…TSKD. Glycyl lysine isopeptide (Lys-Gly) (interchain with G-Cter in ubiquitin) cross-links involve residues Lys-1817 and Lys-1818. Ser-1848 is modified (phosphoserine). The tract at residues 2004-2045 is disordered; sequence ATQVRWLQETSKDSSGTKPASKRPMSSPEMKSAPKKSKADGQ. Lys-2015 is modified (N6-acetyllysine). A Glycyl lysine isopeptide (Lys-Gly) (interchain with G-Cter in SUMO2) cross-link involves residue Lys-2034.

In terms of assembly, composed predominantly of six polypeptides ranging from 110 to 150 kDa and a minor 300 kDa polypeptide. The majority of N- and C-terminal cleavage products remain tightly, albeit non-covalently, associated. Interacts with POU2F1, CREB3, ZBTB17, EGR2, E2F4, CREBZF, SP1, GABP2, Sin3 HDAC complex (SIN3A, HDAC1, HDAC2, SUDS3), SAP30, SIN3B and FHL2. Component of a MLL1 complex, composed of at least the core components KMT2A/MLL1, ASH2L, HCFC1, WDR5 and RBBP5, as well as the facultative components BACC1, CHD8, DPY30, E2F6, HCFC2, HSP70, INO80C, KANSL1, LAS1L, MAX, MCRS1, MEN1, MGA, KAT8, PELP1, PHF20, PRP31, RING2, RUVBL1, RUVBL2, SENP3, TAF1, TAF4, TAF6, TAF7, TAF9 and TEX10. Component of a THAP1/THAP3-HCFC1-OGT complex that is required for the regulation of the transcriptional activity of RRM1. Interacts directly with THAP3 (via its HBM). Interacts (via the Kelch-repeat domain) with THAP1 (via the HBM); the interaction recruits HCHC1 to the RRM1. Interacts with THAP7 and THAP11 (via the HMB). Interacts directly with OGT; the interaction, which requires the HCFC1 cleavage site domain, glycosylates and promotes the proteolytic processing of HCFC1 and retains OGT in the nucleus. Component of the SET1 complex, at least composed of the catalytic subunit (SETD1A or SETD1B), WDR5, WDR82, RBBP5, ASH2L, CXXC1, HCFC1 and DPY30. Component of the NSL complex at least composed of MOF/KAT8, KANSL1, KANSL2, KANSL3, MCRS1, PHF20, OGT1/OGT, WDR5 and HCFC1. Component of a complex at least composed of ZNF335, HCFC1, CCAR2, EMSY, MKI67, RBBP5, ASH2L and WDR5; the complex is formed as a result of interactions between components of a nuclear receptor-mediated transcription complex and a histone methylation complex. Within the complex interacts with ZNF335. Interacts with TET2 and TET3. Interacts with HCFC1R1. Interacts with THAP11. Interacts (via Kelch domain) with KMT2E (via HBM motif). Interacts with E2F1. Accessory scaffold component of the polycomb repressive deubiquitinase (PR-DUB) complex, at least composed of BAP1, one of ASXL1, ASXL2 or (probably) ASXL3 and one of MBD5 or MBD6; the PR-DUB core associates with a number of accessory proteins, including FOXK1, FOXK2, KDM1B, HCFC1, YY1 and OGT. Interacts with YY1 (via Gly-rich region); the interaction is direct. Interacts with BAP1 (via HBM-like motif). Post-translationally, proteolytically cleaved at one or several PPCE--THET sites within the HCF repeats. Further cleavage of the primary N- and C-terminal chains results in a 'trimming' and accumulation of the smaller chains. Cleavage is promoted by O-glycosylation. O-glycosylated. GlcNAcylation by OGT promotes proteolytic processing. In terms of processing, ubiquitinated. Lys-1817 and Lys-1818 are ubiquitinated both via 'Lys-48'- and 'Lys-63'-linked polyubiquitin chains. BAP1 mediated deubiquitination of 'Lys-48'-linked polyubiquitin chains; deubiquitination by BAP1 does not seem to stabilize the protein. As to expression, expressed in liver, pituitary gland, skeletal muscle, kidney, eye and brain (at protein level). Also observed at low level in heart, spleen and lung.

The protein localises to the nucleus. Its subcellular location is the cytoplasm. Functionally, transcriptional coregulator. Serves as a scaffold protein, bridging interactions between transcription factors, including THAP11 and ZNF143, and transcriptional coregulators. Involved in control of the cell cycle. Also antagonizes transactivation by ZBTB17 and GABP2; represses ZBTB17 activation of the p15(INK4b) promoter and inhibits its ability to recruit p300. Coactivator for EGR2 and GABP2. Tethers the chromatin modifying Set1/Ash2 histone H3 'Lys-4' methyltransferase (H3K4me) and Sin3 histone deacetylase (HDAC) complexes (involved in the activation and repression of transcription respectively) together. As part of the NSL complex it may be involved in acetylation of nucleosomal histone H4 on several lysine residues. Recruits KMT2E to E2F1 responsive promoters promoting transcriptional activation and thereby facilitates G1 to S phase transition. Modulates expression of homeobox protein PDX1, perhaps acting in concert with transcription factor E2F1, thereby regulating pancreatic beta-cell growth and glucose-stimulated insulin secretion. May negatively modulate transcriptional activity of FOXO3. In Mus musculus (Mouse), this protein is Host cell factor 1.